The chain runs to 413 residues: Multifunctional CCA protein (413 aa).

ATP is bound by residues Gly8 and Arg11. Residues Gly8 and Arg11 each contribute to the CTP site. Mg(2+)-binding residues include Asp21 and Asp23. ATP is bound by residues Arg91, Arg137, and Arg140. Positions 91, 137, and 140 each coordinate CTP. One can recognise an HD domain in the interval 225-326; sequence TGVHVMMVID…ANLLQGVDAY (102 aa).

It belongs to the tRNA nucleotidyltransferase/poly(A) polymerase family. Bacterial CCA-adding enzyme type 1 subfamily. In terms of assembly, monomer. Can also form homodimers and oligomers. Mg(2+) is required as a cofactor. The cofactor is Ni(2+).

The enzyme catalyses a tRNA precursor + 2 CTP + ATP = a tRNA with a 3' CCA end + 3 diphosphate. The catalysed reaction is a tRNA with a 3' CCA end + 2 CTP + ATP = a tRNA with a 3' CCACCA end + 3 diphosphate. Its function is as follows. Catalyzes the addition and repair of the essential 3'-terminal CCA sequence in tRNAs without using a nucleic acid template. Adds these three nucleotides in the order of C, C, and A to the tRNA nucleotide-73, using CTP and ATP as substrates and producing inorganic pyrophosphate. tRNA 3'-terminal CCA addition is required both for tRNA processing and repair. Also involved in tRNA surveillance by mediating tandem CCA addition to generate a CCACCA at the 3' terminus of unstable tRNAs. While stable tRNAs receive only 3'-terminal CCA, unstable tRNAs are marked with CCACCA and rapidly degraded. The polypeptide is Multifunctional CCA protein (Nitrosospira multiformis (strain ATCC 25196 / NCIMB 11849 / C 71)).